The sequence spans 217 residues: Large ribosomal subunit protein uL3 (217 aa).

The residue at position 152 (Gln152) is an N5-methylglutamine.

It belongs to the universal ribosomal protein uL3 family. Part of the 50S ribosomal subunit. Forms a cluster with proteins L14 and L19. Post-translationally, methylated by PrmB.

Functionally, one of the primary rRNA binding proteins, it binds directly near the 3'-end of the 23S rRNA, where it nucleates assembly of the 50S subunit. This Blochmanniella pennsylvanica (strain BPEN) protein is Large ribosomal subunit protein uL3.